The following is a 201-amino-acid chain: ATP-dependent Clp protease proteolytic subunit (201 aa).

The active-site Nucleophile is serine 98. The active site involves histidine 123.

The protein belongs to the peptidase S14 family. In terms of assembly, fourteen ClpP subunits assemble into 2 heptameric rings which stack back to back to give a disk-like structure with a central cavity, resembling the structure of eukaryotic proteasomes.

The protein resides in the cytoplasm. The enzyme catalyses Hydrolysis of proteins to small peptides in the presence of ATP and magnesium. alpha-casein is the usual test substrate. In the absence of ATP, only oligopeptides shorter than five residues are hydrolyzed (such as succinyl-Leu-Tyr-|-NHMec, and Leu-Tyr-Leu-|-Tyr-Trp, in which cleavage of the -Tyr-|-Leu- and -Tyr-|-Trp bonds also occurs).. Functionally, cleaves peptides in various proteins in a process that requires ATP hydrolysis. Has a chymotrypsin-like activity. Plays a major role in the degradation of misfolded proteins. This chain is ATP-dependent Clp protease proteolytic subunit, found in Rickettsia felis (strain ATCC VR-1525 / URRWXCal2) (Rickettsia azadi).